A 535-amino-acid chain; its full sequence is MDNMELCEANNVPLTPITFLKRASECYPNRTSIIYGQTRFTWPQTYDRCCRLAASLISLNIAKNDVVSVVAPNTPAIYEMHFAVPMAGAVLNPINTRLDATSITTILRHAQPKILFIHRNFEPLAREILHLLSCDDLQLNLLVIFIDEYNSAKRVSSEELDYESLIQMGEPTSPLVENMFRIQNEQDPISLNYTSGTTADPKGVVISHRGAYLTSLGVIIGWEMSTCPVYLWIFAYVSLQWMDVYMGNSSARGHQCVYEPRNPLDMSHRSGPVHLMTGGSPLPAALVKKVQRLGFQVLHVYGLTEATGPALFCEWQDEWNRLTENQQMELKARQGLGILSVAEVDVKYNETQESVPHDGKTMGEIVMKGNNIMKGYLKNSKATFEAFKHGWLNTGDVGVIHPDGHIEIKDRSKDIIISGGENISSVEVENILYKHPRVFEVAVVAMPHRVWGETPCAFIVLQKGETNKEDDEYKFVAREKELIDYCRENLPHFMCPRKVVFLEELPKNGNGKILKPNLRAITKGLVAEDEANVIS.

It belongs to the ATP-dependent AMP-binding enzyme family.

In terms of biological role, may act as an acid--thiol ligase that activates carboxylic acids by forming acyl-CoAs. This chain is Probable acyl-activating enzyme 22 (AEE22), found in Arabidopsis thaliana (Mouse-ear cress).